The chain runs to 315 residues: Acetaldehyde dehydrogenase 2 (315 aa).

13–16 (SGNI) contacts NAD(+). The active-site Acyl-thioester intermediate is C131. NAD(+) is bound by residues 162-170 (SAGPGTRAN) and N290.

It belongs to the acetaldehyde dehydrogenase family.

It catalyses the reaction acetaldehyde + NAD(+) + CoA = acetyl-CoA + NADH + H(+). The chain is Acetaldehyde dehydrogenase 2 from Pseudomonas putida (strain W619).